Reading from the N-terminus, the 193-residue chain is RNA polymerase sigma-H factor (193 aa).

Positions aspartate 49 to leucine 62 match the Polymerase core binding motif. The segment at residues tyrosine 157–phenylalanine 176 is a DNA-binding region (H-T-H motif).

It belongs to the sigma-70 factor family. ECF subfamily.

Its function is as follows. Sigma factors are initiation factors that promote the attachment of RNA polymerase to specific initiation sites and are then released. This sigma factor regulates genes such as algD, involved in alginate biosynthesis. This chain is RNA polymerase sigma-H factor (algU), found in Pseudomonas aeruginosa (strain ATCC 15692 / DSM 22644 / CIP 104116 / JCM 14847 / LMG 12228 / 1C / PRS 101 / PAO1).